Consider the following 388-residue polypeptide: MIKNPKVLILTAHYGNGHVQVAKTLEQAFHQKGIEDVIVCDLFGESHPVITDITKYLYLKSYTIGKELYRLFYYGVEKIYDKKIASWYANFGRKRLKALLHTEKPDIVINTFPIIAVPELKKQTGFSIPVYNVLTDFCLHKIWIHREVDRYFVATDHVKQVMIEIGVPAERIVETGIPIRKNFELTMNSELIYNKYQLSREKKILLIVAGAHGVLGNVKDLCASFMSVPNLQVAVVCGKNDALKQELLKLQEQNSEALKVFGYIENIDELFRVTSCMITKPGGITLSEAAALQVPVILYKPVPGQENENAIYFESKGAAVVIREDAEIFEKTKALLEDDRKLLQMKEAMGSIYRPEPAAHIVDVILEENHAQTNHVPMKSPALAQSFT.

It belongs to the glycosyltransferase 28 family. UgtP subfamily.

The protein localises to the cell membrane. It catalyses the reaction a 1,2-diacyl-3-O-(beta-D-glucopyranosyl)-sn-glycerol + UDP-alpha-D-glucose = a 1,2-diacyl-3-O-(beta-D-Glc-(1-&gt;6)-beta-D-Glc)-sn-glycerol + UDP + H(+). The catalysed reaction is a 1,2-diacyl-3-O-(beta-D-Glc-(1-&gt;6)-beta-D-Glc)-sn-glycerol + UDP-alpha-D-glucose = a 1,2-diacyl-3-O-(beta-D-Glc-(1-&gt;6)-beta-D-Glc-(1-&gt;6)-beta-D-Glc)-sn-glycerol + UDP + H(+). It carries out the reaction a 1,2-diacyl-sn-glycerol + UDP-alpha-D-glucose = a 1,2-diacyl-3-O-(beta-D-glucopyranosyl)-sn-glycerol + UDP + H(+). The protein operates within glycolipid metabolism; diglucosyl-diacylglycerol biosynthesis. Functionally, processive glucosyltransferase involved in the biosynthesis of both the bilayer- and non-bilayer-forming membrane glucolipids. Is able to successively transfer up to three glucosyl residues to diacylglycerol (DAG), thereby catalyzing the formation of beta-monoglucosyl-DAG (3-O-(beta-D-glucopyranosyl)-1,2-diacyl-sn-glycerol), beta-diglucosyl-DAG (3-O-(beta-D-glucopyranosyl-beta-(1-&gt;6)-D-glucopyranosyl)-1,2-diacyl-sn-glycerol) and beta-triglucosyl-DAG (3-O-(beta-D-glucopyranosyl-beta-(1-&gt;6)-D-glucopyranosyl-beta-(1-&gt;6)-D-glucopyranosyl)-1,2-diacyl-sn-glycerol). Beta-diglucosyl-DAG is the predominant glycolipid found in Bacillales and is also used as a membrane anchor for lipoteichoic acid (LTA). The chain is Processive diacylglycerol beta-glucosyltransferase from Bacillus cytotoxicus (strain DSM 22905 / CIP 110041 / 391-98 / NVH 391-98).